Reading from the N-terminus, the 238-residue chain is MVTSEGLASVDSWLYRQGFNVDSWLLSDTFSHDNDLLARALHTTVTAPHTLTPSSAFFDSSAVSHPSSTNTLSSTVSGASDPEIIGGGAKRKRNCLLTDGKAAKRRARASKKSQTTFITADPSNFRQMVQQVTGAKYIDDSSSFGIFDPIVKPEPLRFVNKLPCGPSDRSTAVPMLDTSAFLSNHHQENLAVGNAFSGNSSSVGLPSGKPSATADPGGSAVEFDNYPTFPTLESWKVM.

Positions 68–78 are enriched in polar residues; sequence STNTLSSTVSG. Residues 68-87 are disordered; the sequence is STNTLSSTVSGASDPEIIGG. The short motif at 92–108 is the Bipartite nuclear localization signal element; that stretch reads KRNCLLTDGKAAKRRAR. The VQ signature appears at 125 to 134; it reads FRQMVQQVTG. The disordered stretch occupies residues 201-220; the sequence is SSVGLPSGKPSATADPGGSA.

In terms of assembly, interacts with calmodulin (CaM). Interacts with WRKY25 and WRKY51. Expressed in leaves, flowers and siliques.

Its subcellular location is the nucleus. Functionally, calmodulin-binding protein that functions as a negative regulator of osmotic stress tolerance. This chain is Calmodulin-binding protein 25, found in Arabidopsis thaliana (Mouse-ear cress).